Consider the following 154-residue polypeptide: 6,7-dimethyl-8-ribityllumazine synthase (154 aa).

Residues Phe23, Ala57–Glu59, and Ala81–Ile83 contribute to the 5-amino-6-(D-ribitylamino)uracil site. Ser86–Thr87 is a binding site for (2S)-2-hydroxy-3-oxobutyl phosphate. His89 serves as the catalytic Proton donor. 5-amino-6-(D-ribitylamino)uracil is bound at residue Phe114. Arg128 serves as a coordination point for (2S)-2-hydroxy-3-oxobutyl phosphate.

It belongs to the DMRL synthase family.

The enzyme catalyses (2S)-2-hydroxy-3-oxobutyl phosphate + 5-amino-6-(D-ribitylamino)uracil = 6,7-dimethyl-8-(1-D-ribityl)lumazine + phosphate + 2 H2O + H(+). It participates in cofactor biosynthesis; riboflavin biosynthesis; riboflavin from 2-hydroxy-3-oxobutyl phosphate and 5-amino-6-(D-ribitylamino)uracil: step 1/2. Functionally, catalyzes the formation of 6,7-dimethyl-8-ribityllumazine by condensation of 5-amino-6-(D-ribitylamino)uracil with 3,4-dihydroxy-2-butanone 4-phosphate. This is the penultimate step in the biosynthesis of riboflavin. The chain is 6,7-dimethyl-8-ribityllumazine synthase from Nitratiruptor sp. (strain SB155-2).